Consider the following 778-residue polypeptide: LPS-assembly protein LptD (778 aa).

The signal sequence occupies residues 1–23 (MKTRYSVLSVAMTAAFYTQYAQA).

This sequence belongs to the LptD family. Component of the lipopolysaccharide transport and assembly complex. Interacts with LptE and LptA.

The protein resides in the cell outer membrane. In terms of biological role, together with LptE, is involved in the assembly of lipopolysaccharide (LPS) at the surface of the outer membrane. In Actinobacillus pleuropneumoniae serotype 5b (strain L20), this protein is LPS-assembly protein LptD.